A 337-amino-acid polypeptide reads, in one-letter code: tRNA N(3)-cytidine methyltransferase METTL2 (337 aa).

The S-adenosyl-L-methionine site is built by Trp-66, Tyr-70, Gly-140, Asp-165, Asp-191, and Ile-212.

It belongs to the methyltransferase superfamily. METL family. In terms of assembly, monomer.

The protein resides in the cytoplasm. It catalyses the reaction cytidine(32) in tRNA(Thr) + S-adenosyl-L-methionine = N(3)-methylcytidine(32) in tRNA(Thr) + S-adenosyl-L-homocysteine + H(+). The catalysed reaction is cytidine(32) in tRNA(Arg)(CCU) + S-adenosyl-L-methionine = N(3)-methylcytidine(32) in tRNA(Arg)(CCU) + S-adenosyl-L-homocysteine + H(+). S-adenosyl-L-methionine-dependent methyltransferase that mediates N(3)-methylcytidine modification of residue 32 of the tRNA anticodon loop of tRNA(Thr)(UGU) and tRNA(Arg)(CCU). N(3)-methylcytidine methylation by mettl2 requires the N6-threonylcarbamoylation of tRNA (t6A37) by the EKC/KEOPS complex as prerequisite. This chain is tRNA N(3)-cytidine methyltransferase METTL2 (mettl2), found in Xenopus tropicalis (Western clawed frog).